We begin with the raw amino-acid sequence, 594 residues long: Adenine deaminase 1 (594 aa).

It belongs to the metallo-dependent hydrolases superfamily. Adenine deaminase family. It depends on Mn(2+) as a cofactor.

It carries out the reaction adenine + H2O + H(+) = hypoxanthine + NH4(+). This is Adenine deaminase 1 from Jannaschia sp. (strain CCS1).